A 675-amino-acid polypeptide reads, in one-letter code: Probable potassium transport system protein Kup (675 aa).

12 helical membrane passes run 12–32 (LGML…PLYV), 55–75 (VSLI…LVAL), 98–118 (WLIF…TLTP), 143–163 (WLVP…QVLG), 170–190 (SFGP…LLNI), 216–236 (MGIF…ALYS), 249–269 (TWPF…AWML), 296–316 (IAMI…LITG), 345–365 (IYIG…VWLF), 374–394 (AYGL…SQWV), 401–421 (FWSL…LVAS), and 428–448 (GGYL…VWFF).

This sequence belongs to the HAK/KUP transporter (TC 2.A.72) family.

The protein localises to the cell membrane. The enzyme catalyses K(+)(in) + H(+)(in) = K(+)(out) + H(+)(out). Functionally, transport of potassium into the cell. Likely operates as a K(+):H(+) symporter. In Levilactobacillus brevis (strain ATCC 367 / BCRC 12310 / CIP 105137 / JCM 1170 / LMG 11437 / NCIMB 947 / NCTC 947) (Lactobacillus brevis), this protein is Probable potassium transport system protein Kup.